Consider the following 782-residue polypeptide: Pyridoxal-dependent decarboxylase domain-containing protein 1 (782 aa).

The segment covering 26-48 (ILEDNQRPSEEEKDGKKYTRKDI) has biased composition (basic and acidic residues). 4 disordered regions span residues 26–56 (ILEDNQRPSEEEKDGKKYTRKDIPGPLQGSG), 673–695 (QTTGLTPPPTPTSAHGKRQAGQK), 702–721 (RNSDAMSETSSISHLEEVES), and 726–782 (PMPE…DSLR). Polar residues-rich tracts occupy residues 703-714 (NSDAMSETSSIS) and 747-782 (AEQSSTPSIVPTETSSEGSQEPSIPSANTAESDSLR).

It belongs to the group II decarboxylase family. The cofactor is pyridoxal 5'-phosphate.

The sequence is that of Pyridoxal-dependent decarboxylase domain-containing protein 1 (pdxdc1) from Xenopus laevis (African clawed frog).